Here is a 692-residue protein sequence, read N- to C-terminus: Non-hemolytic phospholipase C (692 aa).

The tat-type signal signal peptide spans 1-35 (MISKSRRSFIRLAAGTVGATVATSMLPSSIQAALA).

This sequence belongs to the bacterial phospholipase C family. In terms of processing, predicted to be exported by the Tat system. The position of the signal peptide cleavage has not been experimentally proven.

It catalyses the reaction a 1,2-diacyl-sn-glycero-3-phosphocholine + H2O = phosphocholine + a 1,2-diacyl-sn-glycerol + H(+). Functionally, hydrolyzes phosphatidylserine as well as phosphatidylcholine. The polypeptide is Non-hemolytic phospholipase C (plcN) (Pseudomonas aeruginosa (strain ATCC 15692 / DSM 22644 / CIP 104116 / JCM 14847 / LMG 12228 / 1C / PRS 101 / PAO1)).